A 568-amino-acid polypeptide reads, in one-letter code: Proline--tRNA ligase (568 aa).

This sequence belongs to the class-II aminoacyl-tRNA synthetase family. ProS type 1 subfamily. As to quaternary structure, homodimer.

Its subcellular location is the cytoplasm. The enzyme catalyses tRNA(Pro) + L-proline + ATP = L-prolyl-tRNA(Pro) + AMP + diphosphate. Functionally, catalyzes the attachment of proline to tRNA(Pro) in a two-step reaction: proline is first activated by ATP to form Pro-AMP and then transferred to the acceptor end of tRNA(Pro). As ProRS can inadvertently accommodate and process non-cognate amino acids such as alanine and cysteine, to avoid such errors it has two additional distinct editing activities against alanine. One activity is designated as 'pretransfer' editing and involves the tRNA(Pro)-independent hydrolysis of activated Ala-AMP. The other activity is designated 'posttransfer' editing and involves deacylation of mischarged Ala-tRNA(Pro). The misacylated Cys-tRNA(Pro) is not edited by ProRS. The sequence is that of Proline--tRNA ligase from Listeria innocua serovar 6a (strain ATCC BAA-680 / CLIP 11262).